The chain runs to 394 residues: Elongation factor Tu (394 aa).

Residues 10–204 (KPHVNVGTIG…ALDTYIPEPE (195 aa)) enclose the tr-type G domain. Positions 19-26 (GHVDHGKT) are G1. Residue 19 to 26 (GHVDHGKT) coordinates GTP. Thr26 contributes to the Mg(2+) binding site. The tract at residues 60-64 (GITIN) is G2. Residues 81 to 84 (DCPG) are G3. GTP-binding positions include 81-85 (DCPGH) and 136-139 (NKCD). Residues 136–139 (NKCD) form a G4 region. The G5 stretch occupies residues 174 to 176 (SAL).

Belongs to the TRAFAC class translation factor GTPase superfamily. Classic translation factor GTPase family. EF-Tu/EF-1A subfamily. Monomer.

It is found in the cytoplasm. It carries out the reaction GTP + H2O = GDP + phosphate + H(+). GTP hydrolase that promotes the GTP-dependent binding of aminoacyl-tRNA to the A-site of ribosomes during protein biosynthesis. The sequence is that of Elongation factor Tu from Shewanella pealeana (strain ATCC 700345 / ANG-SQ1).